Reading from the N-terminus, the 100-residue chain is Putative protein adenylyltransferase MJ1379 (100 aa).

Positions 31–45 (GSYARGEQTEESDID) match the GSX(10)DXD motif motif. Asp-43, Asp-45, and Asp-77 together coordinate Mg(2+).

Belongs to the MntA antitoxin family. As to quaternary structure, probably forms a complex with cognate toxin MJ1380. It depends on Mg(2+) as a cofactor.

The enzyme catalyses L-tyrosyl-[protein] + ATP = O-(5'-adenylyl)-L-tyrosyl-[protein] + diphosphate. It carries out the reaction O-(5'-adenylyl)-L-tyrosyl-[protein] + ATP = O-[5'-(adenylyl-(5'-&gt;3')-adenylyl)]-L-tyrosyl-[protein] + diphosphate. Functionally, probable antitoxin component of a putative type VII toxin-antitoxin (TA) system. Neutralizes cognate toxic MJ1380 by di-AMPylation. The protein is Putative protein adenylyltransferase MJ1379 of Methanocaldococcus jannaschii (strain ATCC 43067 / DSM 2661 / JAL-1 / JCM 10045 / NBRC 100440) (Methanococcus jannaschii).